A 439-amino-acid polypeptide reads, in one-letter code: Adenylosuccinate synthetase (439 aa).

Residues 14-20 and 42-44 each bind GTP; these read GDEGKGK and GHT. D15 functions as the Proton acceptor in the catalytic mechanism. D15 and G42 together coordinate Mg(2+). Residues 15–18, 40–43, T130, R144, Q225, T240, and R304 each bind IMP; these read DEGK and NAGH. Residue H43 is the Proton donor of the active site. 300–306 provides a ligand contact to substrate; sequence TTTGRRR. GTP-binding positions include R306, 332–334, and 414–416; these read KLD and SLG.

This sequence belongs to the adenylosuccinate synthetase family. In terms of assembly, homodimer. It depends on Mg(2+) as a cofactor.

It localises to the cytoplasm. The enzyme catalyses IMP + L-aspartate + GTP = N(6)-(1,2-dicarboxyethyl)-AMP + GDP + phosphate + 2 H(+). Its pathway is purine metabolism; AMP biosynthesis via de novo pathway; AMP from IMP: step 1/2. In terms of biological role, plays an important role in the de novo pathway of purine nucleotide biosynthesis. Catalyzes the first committed step in the biosynthesis of AMP from IMP. In Prochlorococcus marinus (strain MIT 9303), this protein is Adenylosuccinate synthetase.